We begin with the raw amino-acid sequence, 256 residues long: Imidazole glycerol phosphate synthase subunit HisF (256 aa).

Residues Asp11 and Asp130 contribute to the active site.

It belongs to the HisA/HisF family. As to quaternary structure, heterodimer of HisH and HisF.

Its subcellular location is the cytoplasm. The enzyme catalyses 5-[(5-phospho-1-deoxy-D-ribulos-1-ylimino)methylamino]-1-(5-phospho-beta-D-ribosyl)imidazole-4-carboxamide + L-glutamine = D-erythro-1-(imidazol-4-yl)glycerol 3-phosphate + 5-amino-1-(5-phospho-beta-D-ribosyl)imidazole-4-carboxamide + L-glutamate + H(+). It participates in amino-acid biosynthesis; L-histidine biosynthesis; L-histidine from 5-phospho-alpha-D-ribose 1-diphosphate: step 5/9. IGPS catalyzes the conversion of PRFAR and glutamine to IGP, AICAR and glutamate. The HisF subunit catalyzes the cyclization activity that produces IGP and AICAR from PRFAR using the ammonia provided by the HisH subunit. The polypeptide is Imidazole glycerol phosphate synthase subunit HisF (Prochlorococcus marinus (strain NATL2A)).